Consider the following 291-residue polypeptide: 4-hydroxy-tetrahydrodipicolinate synthase (291 aa).

Position 45 (T45) interacts with pyruvate. Y133 serves as the catalytic Proton donor/acceptor. The active-site Schiff-base intermediate with substrate is the K161. I203 provides a ligand contact to pyruvate.

This sequence belongs to the DapA family. As to quaternary structure, homotetramer; dimer of dimers.

The protein resides in the cytoplasm. The enzyme catalyses L-aspartate 4-semialdehyde + pyruvate = (2S,4S)-4-hydroxy-2,3,4,5-tetrahydrodipicolinate + H2O + H(+). It functions in the pathway amino-acid biosynthesis; L-lysine biosynthesis via DAP pathway; (S)-tetrahydrodipicolinate from L-aspartate: step 3/4. In terms of biological role, catalyzes the condensation of (S)-aspartate-beta-semialdehyde [(S)-ASA] and pyruvate to 4-hydroxy-tetrahydrodipicolinate (HTPA). In Neisseria meningitidis serogroup C / serotype 2a (strain ATCC 700532 / DSM 15464 / FAM18), this protein is 4-hydroxy-tetrahydrodipicolinate synthase.